The sequence spans 258 residues: tRNA (guanine-N(1)-)-methyltransferase (258 aa).

S-adenosyl-L-methionine is bound by residues glycine 122 and 142-147 (LGDFVL).

The protein belongs to the RNA methyltransferase TrmD family. As to quaternary structure, homodimer.

The protein resides in the cytoplasm. It carries out the reaction guanosine(37) in tRNA + S-adenosyl-L-methionine = N(1)-methylguanosine(37) in tRNA + S-adenosyl-L-homocysteine + H(+). Functionally, specifically methylates guanosine-37 in various tRNAs. This is tRNA (guanine-N(1)-)-methyltransferase from Hahella chejuensis (strain KCTC 2396).